A 653-amino-acid chain; its full sequence is 2-oxoglutarate oxidoreductase subunit KorA (653 aa).

A disordered region spans residues 1–21; that stretch reads MDPNGSGAGPESHDAAFHAAP. Residues 11 to 21 are compositionally biased toward basic and acidic residues; it reads ESHDAAFHAAP.

In terms of assembly, KG oxidoreductase (KOR) is composed of KorA and KorB subunits.

It catalyses the reaction 2 oxidized [2Fe-2S]-[ferredoxin] + 2-oxoglutarate + CoA = succinyl-CoA + 2 reduced [2Fe-2S]-[ferredoxin] + CO2 + H(+). The protein operates within carbohydrate metabolism; tricarboxylic acid cycle. Functionally, component of KG oxidoreductase (KOR) that catalyzes the CoA-dependent oxidative decarboxylation of 2-oxoglutarate (alpha-ketoglutarate, KG) to succinyl-CoA. Methyl viologen can act as electron acceptor in vitro; the physiologic electron acceptor is unknown. Is involved in the alternative TCA pathway that functions concurrently with fatty acid beta-oxidation. Since a growing body of evidence indicates that lipids (for example cholesterol and fatty acids) are a predominant growth substrate for M.tuberculosis during infection, flux through KOR likely represents an important step in intermediary metabolism in vivo. KOR-dependent decarboxylation of KG also appears to be an important source of CO(2) in M.tuberculosis metabolism. The chain is 2-oxoglutarate oxidoreductase subunit KorA (korA) from Mycobacterium tuberculosis (strain ATCC 25618 / H37Rv).